The sequence spans 471 residues: Metalloprotease TIKI homolog (471 aa).

A signal peptide spans 1-24 (MAAFTLWILVLNVFLLGFQARKLA). At 25-449 (SNLKFPIQKC…SRKAAASCTP (425 aa)) the chain is on the extracellular side. N-linked (GlcNAc...) asparagine glycans are attached at residues Asn-226, Asn-235, Asn-284, and Asn-342. Positions 369–402 (KAKKSLNTRRERRKGCRGRRKKSKRCQKKKKRKR) are enriched in basic residues. The interval 369-406 (KAKKSLNTRRERRKGCRGRRKKSKRCQKKKKRKRPDYS) is disordered. Residues 450-470 (IWTVSLALTCAVTCLLTYSGF) traverse the membrane as a helical segment. Arg-471 is a topological domain (cytoplasmic).

Belongs to the TIKI family. Mn(2+) is required as a cofactor. Co(2+) serves as cofactor.

It localises to the membrane. In terms of biological role, metalloprotease. The sequence is that of Metalloprotease TIKI homolog from Nematostella vectensis (Starlet sea anemone).